The chain runs to 347 residues: Isocitrate dehydrogenase [NAD] subunit alpha, mitochondrial (347 aa).

The transit peptide at 1–8 (QKQVTRGF) directs the protein to the mitochondrion. NAD(+) is bound at residue 14 to 42 (TVTLIPGDGIGPEISAAVMKIFDAAKAPI). K58 carries the post-translational modification N6-succinyllysine. Phosphothreonine is present on T82. R96, R106, and R127 together coordinate substrate. An N6-acetyllysine modification is found at K204. D214, D238, and D242 together coordinate Mg(2+). Position 324 is an N6-acetyllysine; alternate (K324). K324 carries the post-translational modification N6-succinyllysine; alternate. K331 is subject to N6-succinyllysine.

This sequence belongs to the isocitrate and isopropylmalate dehydrogenases family. As to quaternary structure, heterooligomer of subunits alpha (IDH3A), beta (IDH3B), and gamma (IDH3G) in the apparent ratio of 2:1:1. The heterodimer containing one IDH3A and one IDH3B subunit and the heterodimer containing one IDH3A and one IDH3G subunit assemble into a heterotetramer (which contains two subunits of IDH3A, one of IDH3B and one of IDH3G) and further into the heterooctamer. Mg(2+) serves as cofactor. The cofactor is Mn(2+).

Its subcellular location is the mitochondrion. It catalyses the reaction D-threo-isocitrate + NAD(+) = 2-oxoglutarate + CO2 + NADH. With respect to regulation, the heterotetramer and the heterodimer composed of IDH3A and IDH3G subunits can be allosterically activated by citrate (CIT) or/and ADP, and the two activators can act independently or synergistically. The heterodimer composed of IDH3A and IDH3B subunits cannot be allosterically regulated and the allosteric regulation of the heterotetramer is through the IDH3G subunit and not the IDH3B subunit. The IDH3G subunit contains the allosteric site which consists of a CIT-binding site and an ADP-binding site, and the binding of CIT and ADP causes conformational changes at the allosteric site which are transmitted to the active site in the catalytic subunit (IDH3A) through a cascade of conformational changes at the heterodimer interface, leading to stabilization of the isocitrate-binding at the active site and thus activation of the enzyme. ATP can activate the heterotetramer and the heterodimer composed of IDH3A and IDH3G subunits at low concentrations but inhibits their activities at high concentrations, whereas ATP exhibits only inhibitory effect on the heterodimer composed of IDH3A and IDH3B subunits. Its function is as follows. Catalytic subunit of the enzyme which catalyzes the decarboxylation of isocitrate (ICT) into alpha-ketoglutarate. The heterodimer composed of the alpha (IDH3A) and beta (IDH3B) subunits and the heterodimer composed of the alpha (IDH3A) and gamma (IDH3G) subunits, have considerable basal activity but the full activity of the heterotetramer (containing two subunits of IDH3A, one of IDH3B and one of IDH3G) requires the assembly and cooperative function of both heterodimers. The sequence is that of Isocitrate dehydrogenase [NAD] subunit alpha, mitochondrial (IDH3A) from Macaca fascicularis (Crab-eating macaque).